The chain runs to 758 residues: Vitamin K-dependent gamma-carboxylase (758 aa).

Residues 1 to 21 are disordered; the sequence is MAVSARSARTSPGSDKVQKDK. Residue Ala-2 is modified to N-acetylalanine. At 2-60 the chain is on the cytoplasmic side; the sequence is AVSARSARTSPGSDKVQKDKAELISGPRQDSLMGKLLGFEWTDLSSWRRLVTLLNRPTD. Residues 61–81 form a helical membrane-spanning segment; sequence PASLAVFRFLFGFLMVLDIPQ. Over 82–113 the chain is Lumenal; that stretch reads ERGLSSLDRKYLDGLDVCRFPLLDALRPLPLD. A disulfide bridge connects residues Cys-99 and Cys-450. The chain crosses the membrane as a helical span at residues 114 to 134; sequence WMYLVYTIMFLGALGMMLGLC. The Cytoplasmic portion of the chain corresponds to 135 to 136; it reads YR. The chain crosses the membrane as a helical span at residues 137–157; the sequence is ISCVLFLLPYWYVFLLDKTSW. At 158 to 292 the chain is on the lumenal side; sequence NNHSYLYGLL…VSYFHCMNSQ (135 aa). A helical membrane pass occupies residues 293 to 313; it reads LFSIGMFSYVMLASSPLFCSP. At 314–361 the chain is on the cytoplasmic side; it reads EWPRKLVSYCPQRLQELLPLKAAPQPSVSCVYKRSRGKSGQKPGLRHQ. A helical membrane pass occupies residues 362 to 382; it reads LGAAFTLLYLLEQLFLPYSHF. The Lumenal portion of the chain corresponds to 383–758; that stretch reads LTQGYNNWTN…SNPDPVHSEF (376 aa). The tract at residues 732 to 758 is disordered; that stretch reads GELSPSNMDSSHSNPPESNPDPVHSEF. The span at 735-747 shows a compositional bias: polar residues; sequence SPSNMDSSHSNPP.

It belongs to the vitamin K-dependent gamma-carboxylase family. As to quaternary structure, monomer. May interact with CALU.

The protein localises to the endoplasmic reticulum membrane. It carries out the reaction 4-carboxy-L-glutamyl-[protein] + 2,3-epoxyphylloquinone + H2O + H(+) = phylloquinol + L-glutamyl-[protein] + CO2 + O2. Its function is as follows. Mediates the vitamin K-dependent carboxylation of glutamate residues to calcium-binding gamma-carboxyglutamate (Gla) residues with the concomitant conversion of the reduced hydroquinone form of vitamin K to vitamin K epoxide. Catalyzes gamma-carboxylation of various proteins, such as blood coagulation factors (F2, F7, F9 and F10), osteocalcin (BGLAP) or matrix Gla protein (MGP). This Pongo abelii (Sumatran orangutan) protein is Vitamin K-dependent gamma-carboxylase (GGCX).